Reading from the N-terminus, the 505-residue chain is MLDLTYETPKPKVIAGAREDWELVIGLEVHAQVATNAKLFSGASTLFGAEPNSNVAFVDAGMPGMLPVINEECVAQAVRTGLGLKAAINLTSAFDRKNYFYPDLPQGYQISQLYHPIVGEGEVLVELGDGTARVVRIERIHLEQDAGKSIHDMDPHMSFVDLNRTGVALMEIVSRPDIRGPEEAAAYVSKLRQIMRYLGTCDGNMQNGNLRADVNVSVCRPGDYEKYQASQDFSHLGTRCEIKNMNSLRFIQQAIEYEARRQIAIIEDGGSVTQETRLYDPDKGETRSMRSKEEAHDYRYFPDPDLLPLEIEQAWVDDIAAALPELPDAKKARFITEFGLSDYDASVLTADTTNAAYFEAVAGEAGDGKLAANWVINELFGRLKKEDHDITESPVSPAQLAGIIKLIKADAISGKIAKDLFEIVYTEGGDPAEIVEARGMKQVTDTGAIEAAVDEIIAANPAQVAKAQENPKLAGWFVGQVMKATGGKANPKAVNQIVAAKLAQQ.

This sequence belongs to the GatB/GatE family. GatB subfamily. In terms of assembly, heterotrimer of A, B and C subunits.

The enzyme catalyses L-glutamyl-tRNA(Gln) + L-glutamine + ATP + H2O = L-glutaminyl-tRNA(Gln) + L-glutamate + ADP + phosphate + H(+). It carries out the reaction L-aspartyl-tRNA(Asn) + L-glutamine + ATP + H2O = L-asparaginyl-tRNA(Asn) + L-glutamate + ADP + phosphate + 2 H(+). Its function is as follows. Allows the formation of correctly charged Asn-tRNA(Asn) or Gln-tRNA(Gln) through the transamidation of misacylated Asp-tRNA(Asn) or Glu-tRNA(Gln) in organisms which lack either or both of asparaginyl-tRNA or glutaminyl-tRNA synthetases. The reaction takes place in the presence of glutamine and ATP through an activated phospho-Asp-tRNA(Asn) or phospho-Glu-tRNA(Gln). In Dinoroseobacter shibae (strain DSM 16493 / NCIMB 14021 / DFL 12), this protein is Aspartyl/glutamyl-tRNA(Asn/Gln) amidotransferase subunit B.